Consider the following 339-residue polypeptide: Glycerol-3-phosphate dehydrogenase [NAD(P)+] (339 aa).

Residues S13, W14, and K108 each contribute to the NADPH site. Sn-glycerol 3-phosphate is bound by residues K108, G139, and S141. Residue A143 coordinates NADPH. Residues K194, D247, S257, R258, and N259 each contribute to the sn-glycerol 3-phosphate site. The active-site Proton acceptor is K194. R258 provides a ligand contact to NADPH. Residues V282 and E284 each coordinate NADPH.

Belongs to the NAD-dependent glycerol-3-phosphate dehydrogenase family.

The protein localises to the cytoplasm. The enzyme catalyses sn-glycerol 3-phosphate + NAD(+) = dihydroxyacetone phosphate + NADH + H(+). It catalyses the reaction sn-glycerol 3-phosphate + NADP(+) = dihydroxyacetone phosphate + NADPH + H(+). It functions in the pathway membrane lipid metabolism; glycerophospholipid metabolism. In terms of biological role, catalyzes the reduction of the glycolytic intermediate dihydroxyacetone phosphate (DHAP) to sn-glycerol 3-phosphate (G3P), the key precursor for phospholipid synthesis. The sequence is that of Glycerol-3-phosphate dehydrogenase [NAD(P)+] from Streptococcus mutans serotype c (strain ATCC 700610 / UA159).